We begin with the raw amino-acid sequence, 83 residues long: MVVCLIGGVAGSLWPRPAGRLRGGCYFAFMGVAWVLLAISAIANAVKGSLWWDIWSLGLLVLIPAVVYGKMRRSRRISSDQDR.

Transmembrane regions (helical) follow at residues 23–43 (GGCY…SAIA) and 49–69 (SLWW…VVYG).

It localises to the cell membrane. This is an uncharacterized protein from Mycobacterium tuberculosis (strain CDC 1551 / Oshkosh).